The sequence spans 963 residues: Integrator complex subunit 4 (963 aa).

An N6-acetyllysine modification is found at Lys26. HEAT repeat units follow at residues 66–105, 145–183, 190–228, 229–263, 277–313, 369–405, 406–444, and 446–484; these read AESV…TAGF, QAIQ…LEKS, GLAA…RGLK, LHQT…SQLY, IRLV…EQVS, NLIE…AQSS, PSFA…NITL, and EDQL…GIHL. Residue Lys791 forms a Glycyl lysine isopeptide (Lys-Gly) (interchain with G-Cter in SUMO1); alternate linkage. Lys791 is covalently cross-linked (Glycyl lysine isopeptide (Lys-Gly) (interchain with G-Cter in SUMO2); alternate).

It belongs to the Integrator subunit 4 family. In terms of assembly, component of the Integrator complex, composed of core subunits INTS1, INTS2, INTS3, INTS4, INTS5, INTS6, INTS7, INTS8, INTS9/RC74, INTS10, INTS11/CPSF3L, INTS12, INTS13, INTS14 and INTS15. The core complex associates with protein phosphatase 2A subunits PPP2CA and PPP2R1A, to form the Integrator-PP2A (INTAC) complex. INTS4 is part of the RNA endonuclease subcomplex, composed of INTS4, INTS9, INTS11 and inositol hexakisphosphate (InsP6). Interacts with BRAT1; interaction is required for the assembly of the RNA endonuclease subcomplex.

The protein localises to the nucleus. It is found in the cytoplasm. Its function is as follows. Component of the integrator complex, a multiprotein complex that terminates RNA polymerase II (Pol II) transcription in the promoter-proximal region of genes. The integrator complex provides a quality checkpoint during transcription elongation by driving premature transcription termination of transcripts that are unfavorably configured for transcriptional elongation: the complex terminates transcription by (1) catalyzing dephosphorylation of the C-terminal domain (CTD) of Pol II subunit POLR2A/RPB1 and SUPT5H/SPT5, (2) degrading the exiting nascent RNA transcript via endonuclease activity and (3) promoting the release of Pol II from bound DNA. The integrator complex is also involved in terminating the synthesis of non-coding Pol II transcripts, such as enhancer RNAs (eRNAs), small nuclear RNAs (snRNAs), telomerase RNAs and long non-coding RNAs (lncRNAs). Within the integrator complex, INTS4 acts as an scaffold that links INTS9 and INTS11. Mediates recruitment of cytoplasmic dynein to the nuclear envelope, probably as component of the integrator complex. This is Integrator complex subunit 4 from Homo sapiens (Human).